Reading from the N-terminus, the 446-residue chain is High mobility group B protein 13 (446 aa).

2 disordered regions span residues 1–43 and 110–130; these read MSTV…TKSF and LAQT…AETK. Residues 11–22 show a composition bias toward basic residues; it reads AKKSRNSRKALK. 2 consecutive DNA-binding regions (HMG box) follow at residues 129 to 197 and 246 to 312; these read TKRP…TKEK and PKQP…EGYK. The span at 349–371 shows a compositional bias: basic and acidic residues; it reads NIIKKTKETAKNKKKNENVDPNK. Residues 349–377 are disordered; the sequence is NIIKKTKETAKNKKKNENVDPNKPKKPTS. Residues 372–440 constitute a DNA-binding region (HMG box 3); it reads PKKPTSSYFL…AYKKEVEEYN (69 aa).

The protein belongs to the HMGB family.

Its subcellular location is the nucleus. In Arabidopsis thaliana (Mouse-ear cress), this protein is High mobility group B protein 13 (HMGB13).